We begin with the raw amino-acid sequence, 179 residues long: NEDD8-conjugating enzyme UBC12 (179 aa).

Residues 24–168 enclose the UBC core domain; the sequence is AAQLRVQKDL…VKHSMAGGSV (145 aa). Catalysis depends on Cys-106, which acts as the Glycyl thioester intermediate.

This sequence belongs to the ubiquitin-conjugating enzyme family. UBC12 subfamily.

It carries out the reaction [E1 NEDD8-activating enzyme]-S-[NEDD8 protein]-yl-L-cysteine + [E2 NEDD8-conjugating enzyme]-L-cysteine = [E1 NEDD8-activating enzyme]-L-cysteine + [E2 NEDD8-conjugating enzyme]-S-[NEDD8-protein]-yl-L-cysteine.. The protein operates within protein modification; protein neddylation. In terms of biological role, accepts the ubiquitin-like protein NEDD8/RUB1 from the UBA3-ULA1 E1 complex and catalyzes its covalent attachment to other proteins. The polypeptide is NEDD8-conjugating enzyme UBC12 (UBC12) (Yarrowia lipolytica (strain CLIB 122 / E 150) (Yeast)).